A 342-amino-acid chain; its full sequence is Cystein proteinase inhibitor protein salarin (342 aa).

The signal sequence occupies residues 1-19; that stretch reads MKSLVLLLLVAVTVSSVVS. Residue Asn-153 is glycosylated (N-linked (GlcNAc) asparagine). Residue Thr-184 is glycosylated (O-linked (GlcNAc) threonine).

In terms of processing, N-glycosylated, with sialylated biantennary complex-type glycans. Post-translationally, O-glycosylated, with sialylated oligosaccharides.

It localises to the cytoplasm. The protein localises to the vacuole. In terms of biological role, inhibits papain and ficin (cysteine proteinases) but not trypsin (a serine proteinase). The polypeptide is Cystein proteinase inhibitor protein salarin (salarin) (Salvelinus alpinus (Arctic char)).